The following is a 375-amino-acid chain: Growth/differentiation factor 8 (375 aa).

The first 18 residues, 1 to 18 (MQKLQISVYIYLFMLIVA), serve as a signal peptide directing secretion. The propeptide occupies 19–266 (GPVDLNEKSE…VTDTPKRSRR (248 aa)). Residues Asn-47 and Asn-71 are each glycosylated (N-linked (GlcNAc...) asparagine). 4 disulfide bridges follow: Cys-272-Cys-282, Cys-281-Cys-340, Cys-309-Cys-372, and Cys-313-Cys-374.

This sequence belongs to the TGF-beta family. Homodimer; disulfide-linked. Interacts with WFIKKN2, leading to inhibit its activity. Interacts with FSTL3. Post-translationally, synthesized as large precursor molecule that undergoes proteolytic cleavage to generate an N-terminal propeptide and a disulfide linked C-terminal dimer, which is the biologically active molecule. The circulating form consists of a latent complex of the C-terminal dimer and other proteins, including its propeptide, which maintain the C-terminal dimer in a latent, inactive state. Ligand activation requires additional cleavage of the prodomain by a tolloid-like metalloproteinase.

The protein localises to the secreted. In terms of biological role, acts specifically as a negative regulator of skeletal muscle growth. This Taurotragus derbianus (Giant eland) protein is Growth/differentiation factor 8 (MSTN).